Here is a 212-residue protein sequence, read N- to C-terminus: Thiamine-phosphate synthase (212 aa).

Residues 33–37 (QMRFK) and Asn65 contribute to the 4-amino-2-methyl-5-(diphosphooxymethyl)pyrimidine site. Asp66 and Asp85 together coordinate Mg(2+). Thr104 contacts 4-amino-2-methyl-5-(diphosphooxymethyl)pyrimidine. Residue 130 to 132 (TNT) participates in 2-[(2R,5Z)-2-carboxy-4-methylthiazol-5(2H)-ylidene]ethyl phosphate binding. Lys133 serves as a coordination point for 4-amino-2-methyl-5-(diphosphooxymethyl)pyrimidine. Gly166 contacts 2-[(2R,5Z)-2-carboxy-4-methylthiazol-5(2H)-ylidene]ethyl phosphate.

This sequence belongs to the thiamine-phosphate synthase family. It depends on Mg(2+) as a cofactor.

The catalysed reaction is 2-[(2R,5Z)-2-carboxy-4-methylthiazol-5(2H)-ylidene]ethyl phosphate + 4-amino-2-methyl-5-(diphosphooxymethyl)pyrimidine + 2 H(+) = thiamine phosphate + CO2 + diphosphate. It carries out the reaction 2-(2-carboxy-4-methylthiazol-5-yl)ethyl phosphate + 4-amino-2-methyl-5-(diphosphooxymethyl)pyrimidine + 2 H(+) = thiamine phosphate + CO2 + diphosphate. It catalyses the reaction 4-methyl-5-(2-phosphooxyethyl)-thiazole + 4-amino-2-methyl-5-(diphosphooxymethyl)pyrimidine + H(+) = thiamine phosphate + diphosphate. The protein operates within cofactor biosynthesis; thiamine diphosphate biosynthesis; thiamine phosphate from 4-amino-2-methyl-5-diphosphomethylpyrimidine and 4-methyl-5-(2-phosphoethyl)-thiazole: step 1/1. Functionally, condenses 4-methyl-5-(beta-hydroxyethyl)thiazole monophosphate (THZ-P) and 2-methyl-4-amino-5-hydroxymethyl pyrimidine pyrophosphate (HMP-PP) to form thiamine monophosphate (TMP). The sequence is that of Thiamine-phosphate synthase from Flavobacterium johnsoniae (strain ATCC 17061 / DSM 2064 / JCM 8514 / BCRC 14874 / CCUG 350202 / NBRC 14942 / NCIMB 11054 / UW101) (Cytophaga johnsonae).